A 441-amino-acid chain; its full sequence is Proline--tRNA ligase (441 aa).

The protein belongs to the class-II aminoacyl-tRNA synthetase family. ProS type 2 subfamily. As to quaternary structure, homodimer.

The protein localises to the cytoplasm. The catalysed reaction is tRNA(Pro) + L-proline + ATP = L-prolyl-tRNA(Pro) + AMP + diphosphate. Its function is as follows. Catalyzes the attachment of proline to tRNA(Pro) in a two-step reaction: proline is first activated by ATP to form Pro-AMP and then transferred to the acceptor end of tRNA(Pro). The polypeptide is Proline--tRNA ligase (Methylorubrum extorquens (strain PA1) (Methylobacterium extorquens)).